The following is a 158-amino-acid chain: uncharacterized protein (158 aa).

The segment at 109-143 adopts an FPG-type zinc-finger fold; that stretch reads RVHARTGLPCPVCGDTVREVSFADKSFQYCPTCQT.

This is an uncharacterized protein from Mycobacterium tuberculosis (strain ATCC 25618 / H37Rv).